The sequence spans 426 residues: Bone morphogenetic protein 7 (426 aa).

Positions 1 to 22 are cleaved as a signal peptide; sequence MNALTVKRRLPVLLFLFHISLS. Positions 23 to 282 are excised as a propeptide; sequence SISSNTILEN…TSDIHLRSVR (260 aa). Asn177, Asn307, and Asn367 each carry an N-linked (GlcNAc...) asparagine glycan. Cystine bridges form between Cys325/Cys391, Cys354/Cys423, and Cys358/Cys425.

This sequence belongs to the TGF-beta family. As to quaternary structure, homodimer; disulfide-linked. Interacts with twsg1.

The protein resides in the secreted. Growth factor of the TGF-beta superfamily that plays important role in various biological processes, including embryogenesis, hematopoiesis, neurogenesis and skeletal morphogenesis. Initiates the canonical BMP signaling cascade by associating with type I receptor ACVR1 and type II receptor ACVR2A. Once all three components are bound together in a complex at the cell surface, ACVR2A phosphorylates and activates ACVR1. In turn, ACVR1 propagates signal by phosphorylating SMAD1/5/8 that travel to the nucleus and act as activators and repressors of transcription of target genes. The chain is Bone morphogenetic protein 7 (bmp7) from Xenopus laevis (African clawed frog).